The primary structure comprises 511 residues: Coatomer subunit delta (511 aa).

The span at 168-177 (QARRDAERQG) shows a compositional bias: basic and acidic residues. The segment at 168 to 188 (QARRDAERQGKKAPGFGGFGS) is disordered. Position 223 is a phosphoserine (Ser223). 2 positions are modified to N6-acetyllysine: Lys233 and Lys241. Phosphoserine is present on Ser244. Residues 271–511 (MESVHMKIEE…TFLVDKYEIL (241 aa)) enclose the MHD domain. N6-acetyllysine occurs at positions 309 and 351. The residue at position 493 (Ser493) is a Phosphoserine.

This sequence belongs to the adaptor complexes medium subunit family. Delta-COP subfamily. In terms of assembly, oligomeric complex that consists of at least the alpha, beta, beta', gamma, delta, epsilon and zeta subunits.

The protein resides in the cytoplasm. It localises to the golgi apparatus membrane. The protein localises to the cytoplasmic vesicle. It is found in the COPI-coated vesicle membrane. In terms of biological role, the coatomer is a cytosolic protein complex that binds to dilysine motifs and reversibly associates with Golgi non-clathrin-coated vesicles, which further mediate biosynthetic protein transport from the ER, via the Golgi up to the trans Golgi network. Coatomer complex is required for budding from Golgi membranes, and is essential for the retrograde Golgi-to-ER transport of dilysine-tagged proteins. In mammals, the coatomer can only be recruited by membranes associated to ADP-ribosylation factors (ARFs), which are small GTP-binding proteins; the complex also influences the Golgi structural integrity, as well as the processing, activity, and endocytic recycling of LDL receptors. This is Coatomer subunit delta (Arcn1) from Mus musculus (Mouse).